We begin with the raw amino-acid sequence, 365 residues long: Carbamoyl phosphate synthase small chain (365 aa).

CPSase stretches follow at residues 1–166 and 1–169; these read MKRQ…PSPG and MKRQ…GRGH. Serine 45, glycine 218, and glycine 220 together coordinate L-glutamine. The Glutamine amidotransferase type-1 domain occupies 170–357; sequence RVVLVDFGMK…LTMIENFKKE (188 aa). The Nucleophile role is filled by cysteine 245. L-glutamine-binding residues include leucine 246, glutamine 249, asparagine 287, glycine 289, and tyrosine 290. Catalysis depends on residues histidine 330 and glutamate 332.

The protein belongs to the CarA family. In terms of assembly, composed of two chains; the small (or glutamine) chain promotes the hydrolysis of glutamine to ammonia, which is used by the large (or ammonia) chain to synthesize carbamoyl phosphate. Tetramer of heterodimers (alpha,beta)4.

It carries out the reaction hydrogencarbonate + L-glutamine + 2 ATP + H2O = carbamoyl phosphate + L-glutamate + 2 ADP + phosphate + 2 H(+). It catalyses the reaction L-glutamine + H2O = L-glutamate + NH4(+). Its pathway is amino-acid biosynthesis; L-arginine biosynthesis; carbamoyl phosphate from bicarbonate: step 1/1. The protein operates within pyrimidine metabolism; UMP biosynthesis via de novo pathway; (S)-dihydroorotate from bicarbonate: step 1/3. In terms of biological role, small subunit of the glutamine-dependent carbamoyl phosphate synthetase (CPSase). CPSase catalyzes the formation of carbamoyl phosphate from the ammonia moiety of glutamine, carbonate, and phosphate donated by ATP, constituting the first step of 2 biosynthetic pathways, one leading to arginine and/or urea and the other to pyrimidine nucleotides. The small subunit (glutamine amidotransferase) binds and cleaves glutamine to supply the large subunit with the substrate ammonia. In Bacillus anthracis, this protein is Carbamoyl phosphate synthase small chain.